Consider the following 356-residue polypeptide: DNA polymerase IV (356 aa).

The UmuC domain occupies isoleucine 4–glycine 185. 2 residues coordinate Mg(2+): aspartate 8 and aspartate 103. Glutamate 104 is an active-site residue.

The protein belongs to the DNA polymerase type-Y family. As to quaternary structure, monomer. Mg(2+) is required as a cofactor.

Its subcellular location is the cytoplasm. The catalysed reaction is DNA(n) + a 2'-deoxyribonucleoside 5'-triphosphate = DNA(n+1) + diphosphate. In terms of biological role, poorly processive, error-prone DNA polymerase involved in untargeted mutagenesis. Copies undamaged DNA at stalled replication forks, which arise in vivo from mismatched or misaligned primer ends. These misaligned primers can be extended by PolIV. Exhibits no 3'-5' exonuclease (proofreading) activity. May be involved in translesional synthesis, in conjunction with the beta clamp from PolIII. The chain is DNA polymerase IV from Pseudoalteromonas atlantica (strain T6c / ATCC BAA-1087).